Reading from the N-terminus, the 48-residue chain is Large ribosomal subunit protein bL32 (48 aa).

Positions 1–20 (MAVPDRRVSKTRAAKRRTHY) are disordered. Positions 9 to 20 (SKTRAAKRRTHY) are enriched in basic residues.

The protein belongs to the bacterial ribosomal protein bL32 family.

In Helicobacter acinonychis (strain Sheeba), this protein is Large ribosomal subunit protein bL32.